Consider the following 305-residue polypeptide: ATP synthase gamma chain (305 aa).

Belongs to the ATPase gamma chain family. In terms of assembly, F-type ATPases have 2 components, CF(1) - the catalytic core - and CF(0) - the membrane proton channel. CF(1) has five subunits: alpha(3), beta(3), gamma(1), delta(1), epsilon(1). CF(0) has three main subunits: a, b and c.

It is found in the cell membrane. In terms of biological role, produces ATP from ADP in the presence of a proton gradient across the membrane. The gamma chain is believed to be important in regulating ATPase activity and the flow of protons through the CF(0) complex. This chain is ATP synthase gamma chain, found in Streptomyces griseus subsp. griseus (strain JCM 4626 / CBS 651.72 / NBRC 13350 / KCC S-0626 / ISP 5235).